We begin with the raw amino-acid sequence, 38 residues long: Beta-defensin 1 (38 aa).

Cystine bridges form between C5/C34, C12/C27, and C17/C35.

This sequence belongs to the beta-defensin family. In terms of assembly, monomer. Homodimer. As to expression, neutrophilic granules.

Its subcellular location is the secreted. The protein localises to the membrane. Functionally, has bactericidal activity. Active against E.coli ML35 but not against S.aureus 502A. May act as a ligand for C-C chemokine receptor CCR6. Positively regulates the sperm motility and bactericidal activity in a CCR6-dependent manner. Binds to CCR6 and triggers Ca2+ mobilization in the sperm which is important for its motility. The chain is Beta-defensin 1 (DEFB1) from Bos taurus (Bovine).